The sequence spans 85 residues: Small ribosomal subunit protein uS17 (85 aa).

Belongs to the universal ribosomal protein uS17 family. As to quaternary structure, part of the 30S ribosomal subunit.

One of the primary rRNA binding proteins, it binds specifically to the 5'-end of 16S ribosomal RNA. The chain is Small ribosomal subunit protein uS17 from Lachnoclostridium phytofermentans (strain ATCC 700394 / DSM 18823 / ISDg) (Clostridium phytofermentans).